Reading from the N-terminus, the 215-residue chain is 23.2 kDa heat shock protein (215 aa).

The first 27 residues, 1-27 (MASMRTAAAAAMLACIAVVLASTAADG), serve as a signal peptide directing secretion. A sHSP domain is found at 69–189 (DVAMLSMARV…GPRVVGIASA (121 aa)). Positions 183–215 (VVGIASAGGDDGGKKSIGGAGEGQNQQAKKVEL) are disordered. Over residues 205-215 (GQNQQAKKVEL) the composition is skewed to polar residues.

It belongs to the small heat shock protein (HSP20) family. May form oligomeric structures.

The protein localises to the endoplasmic reticulum. In Oryza sativa subsp. japonica (Rice), this protein is 23.2 kDa heat shock protein (HSP23.2).